Here is a 355-residue protein sequence, read N- to C-terminus: Zinc finger A20 and AN1 domain-containing stress-associated protein 3 (355 aa).

The A20-type zinc finger occupies 199–233; it reads AGQPVLCASGCGFYGNPATLDMCSVCYRQHCLLNG. Residues cysteine 205, cysteine 209, cysteine 221, cysteine 224, cysteine 295, cysteine 298, cysteine 309, cysteine 311, cysteine 316, histidine 319, histidine 325, and cysteine 327 each coordinate Zn(2+). The AN1-type zinc-finger motif lies at 289–335; sequence KAPANRCASCKKKVGLLGFACRCGATYCGTHRYPEKHACGFDFKGAS.

In terms of biological role, may be involved in environmental stress response. This Oryza sativa subsp. japonica (Rice) protein is Zinc finger A20 and AN1 domain-containing stress-associated protein 3 (SAP3).